Reading from the N-terminus, the 395-residue chain is MSQLDLGTQSLELERFPPQENSNTLQAWEAADEYLLQNIDLSKIDGRPVLVFNDQFGTLACALHAYRPFSSSDSYMSQLATAHNLRLNHLDESAVTLLSSVDDLPEAPKLVVIKIPKALALLEHQLRALRRVVAPDTVIIAGAKSRDVHNSTLQLFEKILGPTKTTLAWKKARLIHCEVADIPLADAPETIDWPLPNTDYIIHNHANVFSRNNLDIGARFFMEILPYDVTGKIADLGCGNGVVGLIALEQNPLAEMLFVDESYMAVASSELNITVNRPQDLSRCEFMVSHGLAGVERESLQLVLCNPPFHQQHAVSDHVAWQMFCDAKRCLKAGGELMIVGNRHLDYFHKLKRLFGNCETLDSNQKFMVLKSVKQASSRSEGGGSGSLDMSYSDF.

The protein belongs to the methyltransferase superfamily. RlmG family.

The protein localises to the cytoplasm. It carries out the reaction guanosine(1835) in 23S rRNA + S-adenosyl-L-methionine = N(2)-methylguanosine(1835) in 23S rRNA + S-adenosyl-L-homocysteine + H(+). Specifically methylates the guanine in position 1835 (m2G1835) of 23S rRNA. This is Ribosomal RNA large subunit methyltransferase G from Yersinia pestis (strain Pestoides F).